A 417-amino-acid chain; its full sequence is Cytoplasmic tRNA 2-thiolation protein 2 (417 aa).

The span at 1 to 11 shows a compositional bias: acidic residues; it reads MCSIVEDDFGD. Residues 1-24 form a disordered region; it reads MCSIVEDDFGDEGGAHAMKEDTPQ. A compositionally biased stretch (basic and acidic residues) spans 13–22; it reads GGAHAMKEDT.

The protein belongs to the CTU2/NCS2 family.

It is found in the cytoplasm. The protein operates within tRNA modification; 5-methoxycarbonylmethyl-2-thiouridine-tRNA biosynthesis. Functionally, plays a central role in 2-thiolation of mcm(5)S(2)U at tRNA wobble positions of tRNA(Lys), tRNA(Glu) and tRNA(Gln). May act by forming a heterodimer with NCS6/CTU1 that ligates sulfur from thiocarboxylated URM1 onto the uridine of tRNAs at wobble position. The protein is Cytoplasmic tRNA 2-thiolation protein 2 of Anopheles gambiae (African malaria mosquito).